The following is a 162-amino-acid chain: Large ribosomal subunit protein uL10 (162 aa).

It belongs to the universal ribosomal protein uL10 family. In terms of assembly, part of the ribosomal stalk of the 50S ribosomal subunit. The N-terminus interacts with L11 and the large rRNA to form the base of the stalk. The C-terminus forms an elongated spine to which L12 dimers bind in a sequential fashion forming a multimeric L10(L12)X complex.

Functionally, forms part of the ribosomal stalk, playing a central role in the interaction of the ribosome with GTP-bound translation factors. This chain is Large ribosomal subunit protein uL10, found in Borreliella afzelii (strain PKo) (Borrelia afzelii).